A 305-amino-acid polypeptide reads, in one-letter code: Homoserine O-acetyltransferase (305 aa).

C142 acts as the Acyl-thioester intermediate in catalysis. Positions 163 and 192 each coordinate substrate. Residue H235 is the Proton acceptor of the active site. E237 is a catalytic residue. R249 lines the substrate pocket.

Belongs to the MetA family.

It localises to the cytoplasm. It catalyses the reaction L-homoserine + acetyl-CoA = O-acetyl-L-homoserine + CoA. It participates in amino-acid biosynthesis; L-methionine biosynthesis via de novo pathway; O-acetyl-L-homoserine from L-homoserine: step 1/1. Transfers an acetyl group from acetyl-CoA to L-homoserine, forming acetyl-L-homoserine. The chain is Homoserine O-acetyltransferase from Roseobacter denitrificans (strain ATCC 33942 / OCh 114) (Erythrobacter sp. (strain OCh 114)).